We begin with the raw amino-acid sequence, 322 residues long: CRISPR-associated endonuclease Cas1 (322 aa).

The Mn(2+) site is built by Glu-149, His-214, and Glu-229.

Belongs to the CRISPR-associated endonuclease Cas1 family. In terms of assembly, homodimer, forms a heterotetramer with a Cas2 homodimer. The cofactor is Mg(2+). Mn(2+) serves as cofactor.

In terms of biological role, CRISPR (clustered regularly interspaced short palindromic repeat), is an adaptive immune system that provides protection against mobile genetic elements (viruses, transposable elements and conjugative plasmids). CRISPR clusters contain spacers, sequences complementary to antecedent mobile elements, and target invading nucleic acids. CRISPR clusters are transcribed and processed into CRISPR RNA (crRNA). Acts as a dsDNA endonuclease. Involved in the integration of spacer DNA into the CRISPR cassette. The polypeptide is CRISPR-associated endonuclease Cas1 (Pyrococcus horikoshii (strain ATCC 700860 / DSM 12428 / JCM 9974 / NBRC 100139 / OT-3)).